A 230-amino-acid chain; its full sequence is MAKRGKKYVEAAKLVDRASAYSATEAVELVKKTNTAKFDATVEAAFRLGVDPKKADQQIRGAVVLPHGTGKVQRVLVFAKGEKAKEAEAAGAEFVGDADYIGKIQKGWFDFDVVVATPDMMGEVGKLGRVLGPKGLMPNPKTGTVTFDVTKAVNEIKAGKVEYRVDKAGNIHVPIGKVSFEDAKLVENFKTIADTLQKAKPAAAKGTYMKNATVASTMGPGVRVDVSTLA.

The protein belongs to the universal ribosomal protein uL1 family. Part of the 50S ribosomal subunit.

In terms of biological role, binds directly to 23S rRNA. The L1 stalk is quite mobile in the ribosome, and is involved in E site tRNA release. Its function is as follows. Protein L1 is also a translational repressor protein, it controls the translation of the L11 operon by binding to its mRNA. The polypeptide is Large ribosomal subunit protein uL1 (Bacillus mycoides (strain KBAB4) (Bacillus weihenstephanensis)).